Here is a 139-residue protein sequence, read N- to C-terminus: Nucleoside diphosphate kinase (139 aa).

ATP contacts are provided by lysine 11, phenylalanine 59, arginine 87, threonine 93, arginine 104, and asparagine 114. The active-site Pros-phosphohistidine intermediate is the histidine 117.

The protein belongs to the NDK family. As to quaternary structure, homotetramer. It depends on Mg(2+) as a cofactor.

Its subcellular location is the cytoplasm. It catalyses the reaction a 2'-deoxyribonucleoside 5'-diphosphate + ATP = a 2'-deoxyribonucleoside 5'-triphosphate + ADP. The catalysed reaction is a ribonucleoside 5'-diphosphate + ATP = a ribonucleoside 5'-triphosphate + ADP. Its function is as follows. Major role in the synthesis of nucleoside triphosphates other than ATP. The ATP gamma phosphate is transferred to the NDP beta phosphate via a ping-pong mechanism, using a phosphorylated active-site intermediate. In Flavobacterium psychrophilum (strain ATCC 49511 / DSM 21280 / CIP 103535 / JIP02/86), this protein is Nucleoside diphosphate kinase.